The sequence spans 256 residues: Ubiquinone/menaquinone biosynthesis C-methyltransferase UbiE (256 aa).

Residues threonine 79, aspartate 100, and 128 to 129 contribute to the S-adenosyl-L-methionine site; that span reads DA.

Belongs to the class I-like SAM-binding methyltransferase superfamily. MenG/UbiE family.

The enzyme catalyses a 2-demethylmenaquinol + S-adenosyl-L-methionine = a menaquinol + S-adenosyl-L-homocysteine + H(+). The catalysed reaction is a 2-methoxy-6-(all-trans-polyprenyl)benzene-1,4-diol + S-adenosyl-L-methionine = a 5-methoxy-2-methyl-3-(all-trans-polyprenyl)benzene-1,4-diol + S-adenosyl-L-homocysteine + H(+). It participates in quinol/quinone metabolism; menaquinone biosynthesis; menaquinol from 1,4-dihydroxy-2-naphthoate: step 2/2. Its pathway is cofactor biosynthesis; ubiquinone biosynthesis. Methyltransferase required for the conversion of demethylmenaquinol (DMKH2) to menaquinol (MKH2) and the conversion of 2-polyprenyl-6-methoxy-1,4-benzoquinol (DDMQH2) to 2-polyprenyl-3-methyl-6-methoxy-1,4-benzoquinol (DMQH2). The polypeptide is Ubiquinone/menaquinone biosynthesis C-methyltransferase UbiE (Pseudomonas paraeruginosa (strain DSM 24068 / PA7) (Pseudomonas aeruginosa (strain PA7))).